Consider the following 209-residue polypeptide: Uracil phosphoribosyltransferase (209 aa).

5-phospho-alpha-D-ribose 1-diphosphate contacts are provided by residues Arg78, Arg103, and 130 to 138 (DPMFATGGT). Uracil-binding positions include Ile193 and 198–200 (GDA). A 5-phospho-alpha-D-ribose 1-diphosphate-binding site is contributed by Asp199.

This sequence belongs to the UPRTase family. The cofactor is Mg(2+).

The catalysed reaction is UMP + diphosphate = 5-phospho-alpha-D-ribose 1-diphosphate + uracil. The protein operates within pyrimidine metabolism; UMP biosynthesis via salvage pathway; UMP from uracil: step 1/1. Allosterically activated by GTP. In terms of biological role, catalyzes the conversion of uracil and 5-phospho-alpha-D-ribose 1-diphosphate (PRPP) to UMP and diphosphate. This chain is Uracil phosphoribosyltransferase, found in Campylobacter fetus subsp. fetus (strain 82-40).